Here is a 255-residue protein sequence, read N- to C-terminus: 5-oxoprolinase subunit A (255 aa).

Belongs to the LamB/PxpA family. In terms of assembly, forms a complex composed of PxpA, PxpB and PxpC.

The catalysed reaction is 5-oxo-L-proline + ATP + 2 H2O = L-glutamate + ADP + phosphate + H(+). Catalyzes the cleavage of 5-oxoproline to form L-glutamate coupled to the hydrolysis of ATP to ADP and inorganic phosphate. The polypeptide is 5-oxoprolinase subunit A (Thermococcus onnurineus (strain NA1)).